A 429-amino-acid polypeptide reads, in one-letter code: Aspartate--tRNA(Asp/Asn) ligase (429 aa).

Residue glutamate 167 participates in L-aspartate binding. The segment at 189-192 is aspartate; sequence QLYK. L-aspartate is bound at residue arginine 210. ATP contacts are provided by residues 210-212 and glutamate 352; that span reads RAE. Mg(2+) is bound by residues glutamate 352 and serine 355. L-aspartate is bound by residues serine 355 and arginine 359. Residue 400-403 participates in ATP binding; it reads GLAR.

It belongs to the class-II aminoacyl-tRNA synthetase family. Type 2 subfamily. Homodimer. Requires Mg(2+) as cofactor.

The protein localises to the cytoplasm. The catalysed reaction is tRNA(Asx) + L-aspartate + ATP = L-aspartyl-tRNA(Asx) + AMP + diphosphate. Functionally, aspartyl-tRNA synthetase with relaxed tRNA specificity since it is able to aspartylate not only its cognate tRNA(Asp) but also tRNA(Asn). Reaction proceeds in two steps: L-aspartate is first activated by ATP to form Asp-AMP and then transferred to the acceptor end of tRNA(Asp/Asn). This chain is Aspartate--tRNA(Asp/Asn) ligase, found in Sulfurisphaera tokodaii (strain DSM 16993 / JCM 10545 / NBRC 100140 / 7) (Sulfolobus tokodaii).